Consider the following 222-residue polypeptide: Thiopurine S-methyltransferase (222 aa).

Trp10, Leu45, Glu66, and Arg123 together coordinate S-adenosyl-L-methionine.

Belongs to the class I-like SAM-binding methyltransferase superfamily. TPMT family.

It localises to the cytoplasm. It carries out the reaction S-adenosyl-L-methionine + a thiopurine = S-adenosyl-L-homocysteine + a thiopurine S-methylether.. The protein is Thiopurine S-methyltransferase of Pseudomonas fluorescens (strain ATCC BAA-477 / NRRL B-23932 / Pf-5).